We begin with the raw amino-acid sequence, 279 residues long: Tryptophan synthase alpha chain (279 aa).

Active-site proton acceptor residues include glutamate 50 and aspartate 61.

The protein belongs to the TrpA family. As to quaternary structure, tetramer of two alpha and two beta chains.

The catalysed reaction is (1S,2R)-1-C-(indol-3-yl)glycerol 3-phosphate + L-serine = D-glyceraldehyde 3-phosphate + L-tryptophan + H2O. Its pathway is amino-acid biosynthesis; L-tryptophan biosynthesis; L-tryptophan from chorismate: step 5/5. Its function is as follows. The alpha subunit is responsible for the aldol cleavage of indoleglycerol phosphate to indole and glyceraldehyde 3-phosphate. The protein is Tryptophan synthase alpha chain of Methylobacterium radiotolerans (strain ATCC 27329 / DSM 1819 / JCM 2831 / NBRC 15690 / NCIMB 10815 / 0-1).